The primary structure comprises 509 residues: Methylthioalkylmalate synthase 1-1, chloroplastic (509 aa).

A chloroplast-targeting transit peptide spans 1-55 (MSFSPTYSIVMASPLLTSSQMIPTTGSTVGFRSILPFGSLRLTRPYKKTSLFISY). A Pyruvate carboxyltransferase domain is found at 91 to 365 (VRVYDTTLRD…YTRIDTRQIM (275 aa)). Mn(2+) is bound by residues D100, H298, and H300.

It belongs to the alpha-IPM synthase/homocitrate synthase family. Monomer. It depends on Mn(2+) as a cofactor. Co(2+) is required as a cofactor.

The protein resides in the plastid. Its subcellular location is the chloroplast. It carries out the reaction 4-methylsulfanyl-2-oxobutanoate + acetyl-CoA + H2O = 2-(2-methylsulfanyl)ethylmalate + CoA + H(+). It functions in the pathway secondary metabolite biosynthesis. Its activity is regulated as follows. Inhibited by EDTA, Cu(2+) and Zn(2+). Determines the side chain length of aliphatic glucosinolate structures. Involved in the biosynthesis of glucosinolate derivative natural products such as 6-(methylsulfinyl)hexylisothiocyanate (6-MSITC), a compound found in wasabi with diverse health-promoting properties. Catalyzes the conversion of 4-methylsulfanyl-2-oxobutanoate (4-MTOB) into 2-(2-methylsulfanyl)ethylmalate (2-(2-MT)EM). The protein is Methylthioalkylmalate synthase 1-1, chloroplastic of Eutrema japonicum (Wasabi plant).